Consider the following 1319-residue polypeptide: DNA-directed RNA polymerase subunit beta' (1319 aa).

Residues Cys-60, Cys-62, Cys-75, and Cys-78 each contribute to the Zn(2+) site. Residues Asp-535, Asp-537, and Asp-539 each coordinate Mg(2+). 4 residues coordinate Zn(2+): Cys-890, Cys-971, Cys-978, and Cys-981.

It belongs to the RNA polymerase beta' chain family. The RNAP catalytic core consists of 2 alpha, 1 beta, 1 beta' and 1 omega subunit. When a sigma factor is associated with the core the holoenzyme is formed, which can initiate transcription. It depends on Mg(2+) as a cofactor. Zn(2+) serves as cofactor.

The catalysed reaction is RNA(n) + a ribonucleoside 5'-triphosphate = RNA(n+1) + diphosphate. Functionally, DNA-dependent RNA polymerase catalyzes the transcription of DNA into RNA using the four ribonucleoside triphosphates as substrates. This is DNA-directed RNA polymerase subunit beta' from Mycobacteroides abscessus (strain ATCC 19977 / DSM 44196 / CCUG 20993 / CIP 104536 / JCM 13569 / NCTC 13031 / TMC 1543 / L948) (Mycobacterium abscessus).